Consider the following 177-residue polypeptide: Large ribosomal subunit protein uL6 (177 aa).

It belongs to the universal ribosomal protein uL6 family. As to quaternary structure, part of the 50S ribosomal subunit.

In terms of biological role, this protein binds to the 23S rRNA, and is important in its secondary structure. It is located near the subunit interface in the base of the L7/L12 stalk, and near the tRNA binding site of the peptidyltransferase center. The chain is Large ribosomal subunit protein uL6 from Rhodopseudomonas palustris (strain BisB5).